Consider the following 443-residue polypeptide: Threonine/serine transporter TdcC (443 aa).

The next 11 membrane-spanning stretches (helical) occupy residues 22-42, 44-64, 97-117, 140-160, 163-183, 207-227, 261-281, 319-339, 366-386, 389-409, and 423-443; these read TTWTLGLFGTAIGAGVLFFPI, AGFGGLIPILLMLVLAYPIAF, GVVITFLYFFAICPLLWIYGV, FVALFLLLLMAFVIWFGKDLM, VMSYLVWPFIASLVLISLSLI, ILVTVWLGISIMVFSFNFSPI, MLMVAVVMFFAFSCLFTLSPA, ASIIALVAIFKSFFGHYLGTL, ISMIFIMGSTWVVAYANPNIL, IEAMGAPIIASLLCLLPMYAI, and DNVFVTVIGLLTILNIVYKLF.

It belongs to the amino acid/polyamine transporter 2 family. SdaC/TdcC subfamily.

The protein resides in the cell inner membrane. The enzyme catalyses L-threonine(in) + H(+)(in) = L-threonine(out) + H(+)(out). It carries out the reaction L-serine(in) + H(+)(in) = L-serine(out) + H(+)(out). In terms of biological role, involved in the import of threonine and serine into the cell, with the concomitant import of a proton (symport system). The chain is Threonine/serine transporter TdcC from Citrobacter koseri (strain ATCC BAA-895 / CDC 4225-83 / SGSC4696).